The following is a 567-amino-acid chain: Dynein, 70 kDa intermediate chain, flagellar outer arm (567 aa).

4 WD repeats span residues 214–254 (VPTS…GPVE), 261–302 (SHRD…ECVE), 360–399 (GHHGPIYGLRRNPFNSKYFLSIGDWTARVWVEDTAVKTPI), and 404–444 (YHPT…NEPT).

This sequence belongs to the dynein intermediate chain family. Consists of at least 3 heavy chains (alpha, beta and gamma), 2 intermediate chains and 8 light chains.

It is found in the cytoplasm. The protein resides in the cytoskeleton. Its subcellular location is the flagellum axoneme. May play a role in regulating dynein heavy chain (DHC) activity. May function in holding IC78 to the DHC, or in stabilizing the entire dynein complex. This chain is Dynein, 70 kDa intermediate chain, flagellar outer arm (ODA6), found in Chlamydomonas reinhardtii (Chlamydomonas smithii).